The chain runs to 395 residues: Carbohydrate sulfotransferase 5 (395 aa).

Residues 1-7 are Cytoplasmic-facing; that stretch reads MRLPRFS. The helical; Signal-anchor for type II membrane protein transmembrane segment at 8-26 threads the bilayer; sequence STVMLSLLMVQTGILVFLV. At 27-395 the chain is on the lumenal side; the sequence is SRQVPSSPAG…ASSTEKQPES (369 aa). 49–55 lines the 3'-phosphoadenylyl sulfate pocket; it reads WRSGSSF. Asn116 and Asn142 each carry an N-linked (GlcNAc...) asparagine glycan. Residue 202–210 participates in 3'-phosphoadenylyl sulfate binding; the sequence is RDPRAVLRS. Asn229 and Asn305 each carry an N-linked (GlcNAc...) asparagine glycan.

Belongs to the sulfotransferase 1 family. Gal/GlcNAc/GalNAc subfamily. In terms of tissue distribution, expressed in cornea.

The protein resides in the golgi apparatus membrane. In terms of biological role, sulfotransferase that utilizes 3'-phospho-5'-adenylyl sulfate (PAPS) as sulfonate donor to catalyze the transfer of sulfate to position 6 of non-reducing N-acetylglucosamine (GlcNAc) residues of keratan. Mediates sulfation of keratan in cornea. Keratan sulfate plays a central role in maintaining corneal transparency. Acts on the non-reducing terminal GlcNAc of short and long carbohydrate substrates that have poly-N-acetyllactosamine structures. May also have activity toward O-linked sugars of mucin-type acceptors. This Mus musculus (Mouse) protein is Carbohydrate sulfotransferase 5 (Chst5).